Consider the following 449-residue polypeptide: Tryptophan--tRNA ligase (449 aa).

ATP is bound by residues 10 to 12 (TTT) and 18 to 19 (GN). Positions 11 to 19 (TTGTPHLGN) match the 'HIGH' region motif. Asp143 lines the L-tryptophan pocket. ATP is bound by residues 155–157 (GRD), Leu197, and 204–208 (KMSKS). A 'KMSKS' region motif is present at residues 204-208 (KMSKS).

This sequence belongs to the class-I aminoacyl-tRNA synthetase family. In terms of assembly, homodimer.

It localises to the cytoplasm. The enzyme catalyses tRNA(Trp) + L-tryptophan + ATP = L-tryptophyl-tRNA(Trp) + AMP + diphosphate + H(+). Functionally, catalyzes the attachment of tryptophan to tRNA(Trp). This is Tryptophan--tRNA ligase from Pseudomonas putida (strain ATCC 47054 / DSM 6125 / CFBP 8728 / NCIMB 11950 / KT2440).